The primary structure comprises 247 residues: ATP synthase subunit a, chloroplastic (247 aa).

The next 5 helical transmembrane spans lie at 38 to 58 (QVLI…IIAV), 95 to 115 (VPFI…GALL), 133 to 153 (DINT…YAGL), 199 to 219 (LVVV…VMFL), and 220 to 240 (GLFT…AYIG).

It belongs to the ATPase A chain family. In terms of assembly, F-type ATPases have 2 components, CF(1) - the catalytic core - and CF(0) - the membrane proton channel. CF(1) has five subunits: alpha(3), beta(3), gamma(1), delta(1), epsilon(1). CF(0) has four main subunits: a, b, b' and c.

The protein resides in the plastid. It localises to the chloroplast thylakoid membrane. Its function is as follows. Key component of the proton channel; it plays a direct role in the translocation of protons across the membrane. The sequence is that of ATP synthase subunit a, chloroplastic from Phalaenopsis aphrodite subsp. formosana (Moth orchid).